We begin with the raw amino-acid sequence, 410 residues long: Polyadenylation and cleavage factor homolog 5 (410 aa).

A compositionally biased stretch (polar residues) spans 1–17; the sequence is MASNGSFSAQRNANAGT. Residues 1–32 are disordered; that stretch reads MASNGSFSAQRNANAGTTMKRRNDNRGYGGGI. Positions 191–214 form a coiled coil; the sequence is SKELTDLLSLLNNEKEKKTSEASN. The C2H2-type zinc-finger motif lies at 247 to 269; that stretch reads RQCTSCGVRFKCQEEHSKHMDWH.

In terms of assembly, forms a complex with cleavage and polyadenylation specificity factor (CPSF) subunits CSTF77, CLPS3, PCFS4 and PCFS1.

The protein localises to the nucleus. This chain is Polyadenylation and cleavage factor homolog 5, found in Arabidopsis thaliana (Mouse-ear cress).